We begin with the raw amino-acid sequence, 442 residues long: Proline--tRNA ligase (442 aa).

The protein belongs to the class-II aminoacyl-tRNA synthetase family. ProS type 2 subfamily. Homodimer.

The protein resides in the cytoplasm. It catalyses the reaction tRNA(Pro) + L-proline + ATP = L-prolyl-tRNA(Pro) + AMP + diphosphate. Its function is as follows. Catalyzes the attachment of proline to tRNA(Pro) in a two-step reaction: proline is first activated by ATP to form Pro-AMP and then transferred to the acceptor end of tRNA(Pro). This is Proline--tRNA ligase from Brucella ovis (strain ATCC 25840 / 63/290 / NCTC 10512).